We begin with the raw amino-acid sequence, 139 residues long: S-adenosylmethionine decarboxylase proenzyme (139 aa).

Catalysis depends on Ser-63, which acts as the Schiff-base intermediate with substrate; via pyruvic acid. Ser-63 carries the pyruvic acid (Ser); by autocatalysis modification. His-68 serves as the catalytic Proton acceptor; for processing activity. The active-site Proton donor; for catalytic activity is the Cys-83.

The protein belongs to the prokaryotic AdoMetDC family. Type 1 subfamily. As to quaternary structure, heterotetramer of two alpha and two beta chains arranged as a dimer of alpha/beta heterodimers. The cofactor is pyruvate. In terms of processing, is synthesized initially as an inactive proenzyme. Formation of the active enzyme involves a self-maturation process in which the active site pyruvoyl group is generated from an internal serine residue via an autocatalytic post-translational modification. Two non-identical subunits are generated from the proenzyme in this reaction, and the pyruvate is formed at the N-terminus of the alpha chain, which is derived from the carboxyl end of the proenzyme. The post-translation cleavage follows an unusual pathway, termed non-hydrolytic serinolysis, in which the side chain hydroxyl group of the serine supplies its oxygen atom to form the C-terminus of the beta chain, while the remainder of the serine residue undergoes an oxidative deamination to produce ammonia and the pyruvoyl group blocking the N-terminus of the alpha chain.

It catalyses the reaction S-adenosyl-L-methionine + H(+) = S-adenosyl 3-(methylsulfanyl)propylamine + CO2. It functions in the pathway amine and polyamine biosynthesis; S-adenosylmethioninamine biosynthesis; S-adenosylmethioninamine from S-adenosyl-L-methionine: step 1/1. Its function is as follows. Catalyzes the decarboxylation of S-adenosylmethionine to S-adenosylmethioninamine (dcAdoMet), the propylamine donor required for the synthesis of the polyamines spermine and spermidine from the diamine putrescine. The sequence is that of S-adenosylmethionine decarboxylase proenzyme from Pyrococcus horikoshii (strain ATCC 700860 / DSM 12428 / JCM 9974 / NBRC 100139 / OT-3).